The sequence spans 323 residues: tRNA dimethylallyltransferase (323 aa).

18 to 25 (GPTASGKS) lines the ATP pocket. Substrate is bound at residue 20 to 25 (TASGKS). Interaction with substrate tRNA regions lie at residues 43–46 (DSAQ), 167–171 (QRIQR), and 249–254 (RCVGYR).

The protein belongs to the IPP transferase family. In terms of assembly, monomer. It depends on Mg(2+) as a cofactor.

The catalysed reaction is adenosine(37) in tRNA + dimethylallyl diphosphate = N(6)-dimethylallyladenosine(37) in tRNA + diphosphate. Its function is as follows. Catalyzes the transfer of a dimethylallyl group onto the adenine at position 37 in tRNAs that read codons beginning with uridine, leading to the formation of N6-(dimethylallyl)adenosine (i(6)A). The sequence is that of tRNA dimethylallyltransferase from Nitrosospira multiformis (strain ATCC 25196 / NCIMB 11849 / C 71).